The sequence spans 488 residues: MVPVIALVGRPNVGKSTMFNRLTKTRDAIVGDLSGLTRDRQYGDASWQGRSYILIDTGGITGDEVGMDEKMAEQSLMAIEEADYVLFLVDARAGMTAADQMIAEHLRKRNKEAILVANKIDNIDADVARAEFSPLGMGNAIPVAGSQGRGINALMEAVLGHIPRDPVEDALDEDVAEGEEATRIPGPSEKDGIKIAIIGRPNVGKSTLVNRMLGEERVVVYDQPGTTRDSIYIPFERDGEKYTFIDTAGVRKRGKIHEEVEKFSVVKTLQAIKDANVVIFVMDAREGVVDHDLNLLGFALDAGRAVVIALNKWDGMEPGERDYVKTELERRLFFVDFADIHFISALHGTGVGHLYKSVQAAFMSAVTRWPTSRLTQILEDAISVHQPPLVNGRRIKLRYAHLGGANPPLIVIHGNQTDKIPNSYSRYLENTYRRVLKLVGTPIRIEYKGGDNPFEGKKNTLTDRQVNKKRRLMSHHKKAEKKRRDKRK.

2 consecutive EngA-type G domains span residues 3-166 and 193-366; these read PVIA…PRDP and IKIA…MSAV. GTP-binding positions include 9–16, 56–60, 118–121, 199–206, 246–250, and 311–314; these read GRPNVGKS, DTGGI, NKID, DTAGV, and NKWD. A KH-like domain is found at 367-451; sequence TRWPTSRLTQ…PIRIEYKGGD (85 aa). Residues 449 to 461 show a composition bias toward basic and acidic residues; sequence GGDNPFEGKKNTL. The interval 449–488 is disordered; that stretch reads GGDNPFEGKKNTLTDRQVNKKRRLMSHHKKAEKKRRDKRK. Residues 467 to 488 are compositionally biased toward basic residues; sequence NKKRRLMSHHKKAEKKRRDKRK.

This sequence belongs to the TRAFAC class TrmE-Era-EngA-EngB-Septin-like GTPase superfamily. EngA (Der) GTPase family. Associates with the 50S ribosomal subunit.

Functionally, GTPase that plays an essential role in the late steps of ribosome biogenesis. This is GTPase Der from Pseudomonas entomophila (strain L48).